The chain runs to 338 residues: 4-hydroxythreonine-4-phosphate dehydrogenase (338 aa).

Residues His-140 and Thr-141 each contribute to the substrate site. A divalent metal cation is bound by residues His-172, His-217, and His-271. 3 residues coordinate substrate: Lys-279, Asn-288, and Arg-297.

It belongs to the PdxA family. Homodimer. The cofactor is a divalent metal cation.

The protein resides in the cytoplasm. It catalyses the reaction 4-(phosphooxy)-L-threonine + NAD(+) = 3-amino-2-oxopropyl phosphate + CO2 + NADH. It functions in the pathway cofactor biosynthesis; pyridoxine 5'-phosphate biosynthesis; pyridoxine 5'-phosphate from D-erythrose 4-phosphate: step 4/5. In terms of biological role, catalyzes the NAD(P)-dependent oxidation of 4-(phosphooxy)-L-threonine (HTP) into 2-amino-3-oxo-4-(phosphooxy)butyric acid which spontaneously decarboxylates to form 3-amino-2-oxopropyl phosphate (AHAP). The sequence is that of 4-hydroxythreonine-4-phosphate dehydrogenase from Prosthecochloris aestuarii (strain DSM 271 / SK 413).